Consider the following 200-residue polypeptide: NADH-quinone oxidoreductase subunit C (200 aa).

It belongs to the complex I 30 kDa subunit family. As to quaternary structure, NDH-1 is composed of 14 different subunits. Subunits NuoB, C, D, E, F, and G constitute the peripheral sector of the complex.

The protein resides in the cell inner membrane. The catalysed reaction is a quinone + NADH + 5 H(+)(in) = a quinol + NAD(+) + 4 H(+)(out). In terms of biological role, NDH-1 shuttles electrons from NADH, via FMN and iron-sulfur (Fe-S) centers, to quinones in the respiratory chain. The immediate electron acceptor for the enzyme in this species is believed to be ubiquinone. Couples the redox reaction to proton translocation (for every two electrons transferred, four hydrogen ions are translocated across the cytoplasmic membrane), and thus conserves the redox energy in a proton gradient. The polypeptide is NADH-quinone oxidoreductase subunit C (Ruegeria pomeroyi (strain ATCC 700808 / DSM 15171 / DSS-3) (Silicibacter pomeroyi)).